We begin with the raw amino-acid sequence, 82 residues long: Beta-defensin 113 (82 aa).

The first 16 residues, 1–16, serve as a signal peptide directing secretion; the sequence is MKILCIFLTFVFTVSC. 3 disulfides stabilise this stretch: Cys35–Cys61, Cys42–Cys56, and Cys46–Cys62.

This sequence belongs to the beta-defensin family.

It is found in the secreted. Has antibacterial activity. In Homo sapiens (Human), this protein is Beta-defensin 113 (DEFB113).